A 106-amino-acid chain; its full sequence is MKRLIFVIGVFIVALALSAFHWVGIIIGGLIVGYFSKNLKEAVAAGLALSLFIFGAFLAYLAYMGMLEKFLTLSPLPYISILLCMALAVISATITNFFSPFAVKQS.

The next 3 helical transmembrane spans lie at 5-27 (IFVIGVFIVALALSAFHWVGIII), 42-64 (AVAAGLALSLFIFGAFLAYLAYM), and 76-98 (LPYISILLCMALAVISATITNFF).

It localises to the cell membrane. This is an uncharacterized protein from Archaeoglobus fulgidus (strain ATCC 49558 / DSM 4304 / JCM 9628 / NBRC 100126 / VC-16).